Reading from the N-terminus, the 42-residue chain is Photosystem I reaction center subunit IX (42 aa).

A helical transmembrane segment spans residues 7-27 (FLSSAPVLIMALLTFTAGILI).

The protein belongs to the PsaJ family.

It localises to the cellular thylakoid membrane. In terms of biological role, may help in the organization of the PsaE and PsaF subunits. In Microcystis aeruginosa (strain NIES-843 / IAM M-2473), this protein is Photosystem I reaction center subunit IX.